A 200-amino-acid polypeptide reads, in one-letter code: Early E1A 21 kDa protein (200 aa).

The tract at residues 78–98 (QDSTTATSAEEPSASTDSISS) is disordered. Residues 114–118 (LRCYE) carry the LXCXE motif, interaction with host RB1 motif. A zinc finger lies at 136–151 (CSTCGGHEVNGFCSLC). A Nuclear localization signal motif is present at residues 196–200 (SRHDE).

Interaction with host RB1 induces the aberrant dissociation of RB1-E2F1 complex thereby disrupting RB1's activity.

Its function is as follows. E1A protein has both transforming and trans-activating activities. Plays a role in viral genome replication by driving entry of quiescent cells into the cell cycle. Disrupts the function of host retinoblastoma protein RB1/pRb and isoform early E1A 26 kDa protein stabilizes TP53, which are key regulators of the cell cycle. Induces the disassembly of the E2F1 transcription factors from RB1 by direct competition for the same binding site on RB1, with subsequent transcriptional activation of E2F1-regulated S-phase genes. Inactivation of the ability of RB1 to arrest the cell cycle is critical for cellular transformation, uncontrolled cellular growth and proliferation induced by viral infection. Stimulation of progression from G1 to S phase allows the virus to efficiently use the cellular DNA replicating machinery to achieve viral genome replication. The polypeptide is Early E1A 21 kDa protein (Murine adenovirus A serotype 1 (MAdV-1)).